A 540-amino-acid chain; its full sequence is Chaperonin GroEL (540 aa).

ATP contacts are provided by residues 30 to 33 (TLGP), 87 to 91 (DGTTT), Gly414, 479 to 481 (NAL), and Asp495.

Belongs to the chaperonin (HSP60) family. As to quaternary structure, forms a cylinder of 14 subunits composed of two heptameric rings stacked back-to-back. Interacts with the co-chaperonin GroES.

It localises to the cytoplasm. It catalyses the reaction ATP + H2O + a folded polypeptide = ADP + phosphate + an unfolded polypeptide.. In terms of biological role, together with its co-chaperonin GroES, plays an essential role in assisting protein folding. The GroEL-GroES system forms a nano-cage that allows encapsulation of the non-native substrate proteins and provides a physical environment optimized to promote and accelerate protein folding. The chain is Chaperonin GroEL from Carboxydothermus hydrogenoformans (strain ATCC BAA-161 / DSM 6008 / Z-2901).